Consider the following 480-residue polypeptide: Endo-1,6-beta-D-glucanase (480 aa).

The first 17 residues, 1–17, serve as a signal peptide directing secretion; it reads MYPPALTLLLTPGLVAA. N-linked (GlcNAc...) asparagine glycosylation occurs at Asn-50. Residue Glu-225 is the Proton donor of the active site. Glu-321 serves as the catalytic Nucleophile.

It belongs to the glycosyl hydrolase 30 family.

The protein localises to the secreted. The catalysed reaction is Random hydrolysis of (1-&gt;6)-linkages in (1-&gt;6)-beta-D-glucans.. In terms of biological role, partially degrades N.crassa cell wall beta-D-glucan, liberating small amounts of oligosaccharides. In Neurospora crassa (strain ATCC 24698 / 74-OR23-1A / CBS 708.71 / DSM 1257 / FGSC 987), this protein is Endo-1,6-beta-D-glucanase (neg-1).